The following is a 252-amino-acid chain: T-box transcription factor mls-1 (252 aa).

A DNA-binding region (T-box) is located at residues 40–210 (LWRRFHNLGT…SNPFAKGFRE (171 aa)).

May interact with unc-37.

Its subcellular location is the nucleus. Functionally, probable transcription factor required for the cell fate specification of non-striated uterine muscle precursor cells. Furthermore, may function with the transcriptional corepressor unc-37. The sequence is that of T-box transcription factor mls-1 from Caenorhabditis elegans.